The chain runs to 428 residues: Enolase (428 aa).

Q164 is a binding site for (2R)-2-phosphoglycerate. E206 (proton donor) is an active-site residue. 3 residues coordinate Mg(2+): D243, E286, and D313. K338, R367, S368, and K389 together coordinate (2R)-2-phosphoglycerate. K338 serves as the catalytic Proton acceptor.

It belongs to the enolase family. It depends on Mg(2+) as a cofactor.

It localises to the cytoplasm. Its subcellular location is the secreted. The protein resides in the cell surface. It catalyses the reaction (2R)-2-phosphoglycerate = phosphoenolpyruvate + H2O. Its pathway is carbohydrate degradation; glycolysis; pyruvate from D-glyceraldehyde 3-phosphate: step 4/5. Functionally, catalyzes the reversible conversion of 2-phosphoglycerate (2-PG) into phosphoenolpyruvate (PEP). It is essential for the degradation of carbohydrates via glycolysis. In Dehalococcoides mccartyi (strain ATCC BAA-2100 / JCM 16839 / KCTC 5957 / BAV1), this protein is Enolase.